Here is a 203-residue protein sequence, read N- to C-terminus: Holliday junction branch migration complex subunit RuvA (203 aa).

The interval 1–63 is domain I; sequence MIGKLSGKID…EEHIHLYGFL (63 aa). A domain II region spans residues 64-142; it reads TLEEKNFFNL…KISSGSVIIK (79 aa). The interval 143–149 is flexible linker; the sequence is DSLNIKN. Residues 150 to 203 are domain III; it reads ITPVASNEVIKALVNLGFSRFEAQNAVQGIIIQNPEISIDELIKTALKNRNAGL.

The protein belongs to the RuvA family. As to quaternary structure, homotetramer. Forms an RuvA(8)-RuvB(12)-Holliday junction (HJ) complex. HJ DNA is sandwiched between 2 RuvA tetramers; dsDNA enters through RuvA and exits via RuvB. An RuvB hexamer assembles on each DNA strand where it exits the tetramer. Each RuvB hexamer is contacted by two RuvA subunits (via domain III) on 2 adjacent RuvB subunits; this complex drives branch migration. In the full resolvosome a probable DNA-RuvA(4)-RuvB(12)-RuvC(2) complex forms which resolves the HJ.

It is found in the cytoplasm. Functionally, the RuvA-RuvB-RuvC complex processes Holliday junction (HJ) DNA during genetic recombination and DNA repair, while the RuvA-RuvB complex plays an important role in the rescue of blocked DNA replication forks via replication fork reversal (RFR). RuvA specifically binds to HJ cruciform DNA, conferring on it an open structure. The RuvB hexamer acts as an ATP-dependent pump, pulling dsDNA into and through the RuvAB complex. HJ branch migration allows RuvC to scan DNA until it finds its consensus sequence, where it cleaves and resolves the cruciform DNA. In Rickettsia felis (strain ATCC VR-1525 / URRWXCal2) (Rickettsia azadi), this protein is Holliday junction branch migration complex subunit RuvA.